Consider the following 309-residue polypeptide: Peptidyl-prolyl cis-trans isomerase 9 (309 aa).

One can recognise a PPIase cyclophilin-type domain in the interval 8-173; sequence FLDISVDENL…AKVLISNCGE (166 aa). Basic and acidic residues-rich tracts occupy residues 217 to 229, 239 to 265, 280 to 289, and 296 to 309; these read NEKK…DKRR, RSHE…RDEN, ERSATPEHWR, and WVHD…EDLV. A disordered region spans residues 217 to 309; that stretch reads NEKKHEMRND…SHKHPEEDLV (93 aa).

This sequence belongs to the cyclophilin-type PPIase family. In terms of tissue distribution, co-expressed with pdi-1 in the syncytial hypodermis.

It carries out the reaction [protein]-peptidylproline (omega=180) = [protein]-peptidylproline (omega=0). PPIases accelerate the folding of proteins. It catalyzes the cis-trans isomerization of proline imidic peptide bonds in oligopeptides. Thought to function as a catalyst in the folding and modification of cuticle collagens. In Caenorhabditis elegans, this protein is Peptidyl-prolyl cis-trans isomerase 9 (cyn-9).